The following is a 440-amino-acid chain: Glycerophosphocholine cholinephosphodiesterase ENPP6 (440 aa).

The N-terminal stretch at 1–22 (MAVKLGTLLLALALGLAQPASA) is a signal peptide. Residues Asp32, Ser71, and Asn92 each contribute to the substrate site. 2 residues coordinate Zn(2+): Asp32 and Ser71. Ser71 functions as the Nucleophile in the catalytic mechanism. A Phosphoserine modification is found at Ser71. N-linked (GlcNAc...) asparagine glycosylation is found at Asn100 and Asn118. A disulfide bond links Cys142 and Cys154. Asp193 serves as a coordination point for substrate. Zn(2+) is bound by residues Asp193, His197, Asp240, and His241. Residue His241 coordinates substrate. N-linked (GlcNAc...) asparagine glycosylation is present at Asn341. His354 is a substrate binding site. His354 is a binding site for Zn(2+). N-linked (GlcNAc...) asparagine glycosylation occurs at Asn404. Ser419 is lipidated: GPI-anchor amidated serine. Residues 420–440 (TAPPVWPSHCALALILLFLLA) constitute a propeptide, removed in mature form.

This sequence belongs to the nucleotide pyrophosphatase/phosphodiesterase family. As to quaternary structure, homodimer; disulfide-linked. Homotetramer. Zn(2+) serves as cofactor. In terms of tissue distribution, predominantly expressed in kidney and brain. In the kidney, expressed specifically in the proximal tubules and thin descending limbs of Henle (at protein level).

The protein localises to the cell membrane. The catalysed reaction is sn-glycerol 3-phosphocholine + H2O = phosphocholine + glycerol + H(+). It carries out the reaction a 1-acyl-sn-glycero-3-phosphocholine + H2O = a 1-acyl-sn-glycerol + phosphocholine + H(+). It catalyses the reaction a 1-O-alkyl-sn-glycero-3-phosphocholine + H2O = a 1-O-alkyl-sn-glycerol + phosphocholine + H(+). The enzyme catalyses 1-dodecanoyl-sn-glycero-3-phosphocholine + H2O = 1-dodecanoyl-sn-glycerol + phosphocholine + H(+). The catalysed reaction is 1-hexadecanoyl-sn-glycero-3-phosphocholine + H2O = 1-hexadecanoyl-sn-glycerol + phosphocholine + H(+). It carries out the reaction 1-(5Z,8Z,11Z,14Z-eicosatetraenoyl)-sn-glycero-3-phosphocholine + H2O = 1-(5Z,8Z,11Z,14Z-eicosatetraenoyl)-sn-glycerol + phosphocholine + H(+). It catalyses the reaction 1-tetradecanoyl-sn-glycero-3-phosphocholine + H2O = 1-tetradecanoyl-sn-glycerol + phosphocholine + H(+). The enzyme catalyses sphing-4-enine-phosphocholine + H2O = sphing-4-enine + phosphocholine + H(+). The catalysed reaction is 1-(9Z-octadecenoyl)-sn-glycero-3-phosphocholine + H2O = 1-(9Z-octadecenoyl)-sn-glycerol + phosphocholine + H(+). It carries out the reaction 1-(9Z,12Z)-octadecadienoyl-sn-glycero-3-phosphocholine + H2O = 1-(9Z,12Z-octadecadienoyl)-sn-glycerol + phosphocholine + H(+). It catalyses the reaction glycero-2-phosphocholine + H2O = phosphocholine + glycerol + H(+). Inhibited by EDTA and EGTA in vitro. In terms of biological role, choline-specific glycerophosphodiesterase that hydrolyzes glycerophosphocholine (GPC) and lysophosphatidylcholine (LPC) and contributes to supplying choline to the cells. Has a preference for LPC with short (12:0 and 14:0) or polyunsaturated (18:2 and 20:4) fatty acids. In vitro, hydrolyzes only choline-containing lysophospholipids, such as sphingosylphosphorylcholine (SPC), platelet-activating factor (PAF) and lysoPAF, but not other lysophospholipids. The chain is Glycerophosphocholine cholinephosphodiesterase ENPP6 from Homo sapiens (Human).